A 64-amino-acid chain; its full sequence is Large ribosomal subunit protein bL35 (64 aa).

Basic residues predominate over residues 1–28 (MPKMKTKSGAAKRFKKTAGGLKHKHAFK). A disordered region spans residues 1–64 (MPKMKTKSGA…ARVERSLRLR (64 aa)). Basic and acidic residues predominate over residues 53-64 (DVARVERSLRLR).

Belongs to the bacterial ribosomal protein bL35 family.

In Pseudomonas aeruginosa (strain LESB58), this protein is Large ribosomal subunit protein bL35.